Reading from the N-terminus, the 334-residue chain is Holliday junction branch migration complex subunit RuvB (334 aa).

The large ATPase domain (RuvB-L) stretch occupies residues 4 to 184 (ADRLISAEPI…FGIVQRLEFY (181 aa)). ATP is bound by residues Ile-23, Arg-24, Gly-65, Lys-68, Thr-69, Thr-70, 131-133 (EDY), Arg-174, Tyr-184, and Arg-221. Thr-69 serves as a coordination point for Mg(2+). The interval 185 to 255 (QVADLQHIVS…VAMQALDMLN (71 aa)) is small ATPAse domain (RuvB-S). Residues 258–334 (AEGFDYMDRK…YKHFGMVREE (77 aa)) are head domain (RuvB-H). Residues Arg-294, Arg-313, and Arg-318 each contribute to the DNA site.

It belongs to the RuvB family. In terms of assembly, homohexamer. Forms an RuvA(8)-RuvB(12)-Holliday junction (HJ) complex. HJ DNA is sandwiched between 2 RuvA tetramers; dsDNA enters through RuvA and exits via RuvB. An RuvB hexamer assembles on each DNA strand where it exits the tetramer. Each RuvB hexamer is contacted by two RuvA subunits (via domain III) on 2 adjacent RuvB subunits; this complex drives branch migration. In the full resolvosome a probable DNA-RuvA(4)-RuvB(12)-RuvC(2) complex forms which resolves the HJ.

It is found in the cytoplasm. It carries out the reaction ATP + H2O = ADP + phosphate + H(+). The RuvA-RuvB-RuvC complex processes Holliday junction (HJ) DNA during genetic recombination and DNA repair, while the RuvA-RuvB complex plays an important role in the rescue of blocked DNA replication forks via replication fork reversal (RFR). RuvA specifically binds to HJ cruciform DNA, conferring on it an open structure. The RuvB hexamer acts as an ATP-dependent pump, pulling dsDNA into and through the RuvAB complex. RuvB forms 2 homohexamers on either side of HJ DNA bound by 1 or 2 RuvA tetramers; 4 subunits per hexamer contact DNA at a time. Coordinated motions by a converter formed by DNA-disengaged RuvB subunits stimulates ATP hydrolysis and nucleotide exchange. Immobilization of the converter enables RuvB to convert the ATP-contained energy into a lever motion, pulling 2 nucleotides of DNA out of the RuvA tetramer per ATP hydrolyzed, thus driving DNA branch migration. The RuvB motors rotate together with the DNA substrate, which together with the progressing nucleotide cycle form the mechanistic basis for DNA recombination by continuous HJ branch migration. Branch migration allows RuvC to scan DNA until it finds its consensus sequence, where it cleaves and resolves cruciform DNA. The sequence is that of Holliday junction branch migration complex subunit RuvB from Serratia proteamaculans (strain 568).